The chain runs to 201 residues: Protein TV1384 (201 aa).

The 190-residue stretch at 11–200 (DIGAKAVMLA…EIEPNGKVEQ (190 aa)) folds into the AMMECR1 domain.

The sequence is that of Protein TV1384 from Thermoplasma volcanium (strain ATCC 51530 / DSM 4299 / JCM 9571 / NBRC 15438 / GSS1).